Consider the following 547-residue polypeptide: Chaperonin GroEL 1 (547 aa).

ATP-binding positions include 30–33 (TLGP), K51, 87–91 (DGTTT), G415, and D494. Positions 524–547 (PKGKAKGGGAGAGMPDYGGDDMDY) are disordered.

The protein belongs to the chaperonin (HSP60) family. As to quaternary structure, forms a cylinder of 14 subunits composed of two heptameric rings stacked back-to-back. Interacts with the co-chaperonin GroES.

Its subcellular location is the cytoplasm. It carries out the reaction ATP + H2O + a folded polypeptide = ADP + phosphate + an unfolded polypeptide.. Its function is as follows. Together with its co-chaperonin GroES, plays an essential role in assisting protein folding. The GroEL-GroES system forms a nano-cage that allows encapsulation of the non-native substrate proteins and provides a physical environment optimized to promote and accelerate protein folding. This chain is Chaperonin GroEL 1, found in Myxococcus xanthus (strain DK1622).